Reading from the N-terminus, the 188-residue chain is Phosphoribosylglycinamide formyltransferase (188 aa).

Residue 12-14 (GSN) participates in N(1)-(5-phospho-beta-D-ribosyl)glycinamide binding. (6R)-10-formyltetrahydrofolate is bound by residues Lys-66, 91 to 94 (MRLV), and Asn-108. The Proton donor role is filled by His-110.

Belongs to the GART family.

It carries out the reaction N(1)-(5-phospho-beta-D-ribosyl)glycinamide + (6R)-10-formyltetrahydrofolate = N(2)-formyl-N(1)-(5-phospho-beta-D-ribosyl)glycinamide + (6S)-5,6,7,8-tetrahydrofolate + H(+). Its pathway is purine metabolism; IMP biosynthesis via de novo pathway; N(2)-formyl-N(1)-(5-phospho-D-ribosyl)glycinamide from N(1)-(5-phospho-D-ribosyl)glycinamide (10-formyl THF route): step 1/1. Its function is as follows. Catalyzes the transfer of a formyl group from 10-formyltetrahydrofolate to 5-phospho-ribosyl-glycinamide (GAR), producing 5-phospho-ribosyl-N-formylglycinamide (FGAR) and tetrahydrofolate. This chain is Phosphoribosylglycinamide formyltransferase, found in Staphylococcus epidermidis (strain ATCC 35984 / DSM 28319 / BCRC 17069 / CCUG 31568 / BM 3577 / RP62A).